Consider the following 162-residue polypeptide: D-beta-D-heptose 1-phosphate adenylyltransferase (162 aa).

It catalyses the reaction D-glycero-beta-D-manno-heptose 1-phosphate + ATP + H(+) = ADP-D-glycero-beta-D-manno-heptose + diphosphate. Its pathway is nucleotide-sugar biosynthesis; ADP-L-glycero-beta-D-manno-heptose biosynthesis; ADP-L-glycero-beta-D-manno-heptose from D-glycero-beta-D-manno-heptose 7-phosphate: step 3/4. It functions in the pathway bacterial outer membrane biogenesis; LPS core biosynthesis. Functionally, catalyzes the ADP transfer from ATP to D-glycero-beta-D-manno-heptose 1-phosphate, yielding ADP-D-glycero-beta-D-manno-heptose. Cannot use GTP, UTP, or CTP as substrate. Is not active against the alpha-anomer substrate. Is also able to catalyze the ADP transfer to beta-glucose 1-phosphate in vitro, yielding ADP-beta-glucose. The protein is D-beta-D-heptose 1-phosphate adenylyltransferase of Bordetella bronchiseptica (strain ATCC BAA-588 / NCTC 13252 / RB50) (Alcaligenes bronchisepticus).